The following is a 759-amino-acid chain: MPLPIPRLLIPALLLASGASLAENDLNWVDREQMATFPAVQQREIPDWCAGIYYNPHVGMPVEGSDTVITADHSTLTQDGLIKLDGDVLIEQPGRRITTDIAELDQATGKFELENGMRMESDQATFIAENMSGQTRRKEGSLQGVRYSLFDTSARGSANYIFLKQNTTTITHGTYTTCAPGSNGWVMQGDRIFLDRDKGWGEANNVVLKVKSVPIFWLPWMTFPIDDRRKSGLLFPTLSVGDSSGLDISQPIYLNLHPQLDATISPRYIDGRGSGLDSEMRYLSRWGEGSLSYGVLFNDRKFDNENRQVGRWTHNGDINRWSLETDFTYVSDDFYFKDLDTGLEISSQTHLPRLGEARYYGRTWQVLGRLQSWQTIDPTLDDADLPYRRLPQLQLTGDPTLVGPVKGLWLSDITAFGRSDSDDSGKATGLRGHMAPALTMRLQNSWGYVEPRARLYHTQYRLDSVDANEEDNPDLTTWGASLDSGLFFERAGNWFGSSFTQTLEPRLFLNKVAYEDQSELPNFDSGELTFSYNSLFRENRFIGYDRIGDEEKLAVGLTSRFLHDGTGREQLRLRVAQGFYFEDRKVVTERAVEDPTDDQTPVIGDARWNFAQDWYLYSEGQWDIEENKRERSNFQIGYNDRERRVVNVGYHDRPADSIRESEVSAILPVHRHWRLIGRWMYDLDNQRSLETMAGTEYRNCCWKLRLLSQRELMDDNGDGNLEADSTIWFQIQMIGLGGFGGQVDSLLERSIPGYRRQYD.

Positions 1–22 (MPLPIPRLLIPALLLASGASLA) are cleaved as a signal peptide.

The protein belongs to the LptD family. Component of the lipopolysaccharide transport and assembly complex. Interacts with LptE and LptA.

It is found in the cell outer membrane. In terms of biological role, together with LptE, is involved in the assembly of lipopolysaccharide (LPS) at the surface of the outer membrane. The sequence is that of LPS-assembly protein LptD from Alcanivorax borkumensis (strain ATCC 700651 / DSM 11573 / NCIMB 13689 / SK2).